The chain runs to 478 residues: MSRFSGALQLTDLDDFITPSQECIKPVKIEANKSKTGSKITIQDDGSYMQATSSGLQKLEKVEITLADCLACSGCITSAEGVLITQQSQEELLKVMNENNLAKLNNQLDAVRFIVFTVAQQPILSLAKRYNLPAEETFERVAGYFRKLGADLVVDTKIADDLALIEGRNEFIERFNTNRQTLPMLASSCPGFVCYAEKTHGSFILPYIASTRSPQQIMGVLVKKYLAKLLGIAADRIYHVTVMPCYDKKLEASREDFFSDVENCRDVDCVITSIEIEQMLDGSGVQALQIVEKAPIDWPWSTGRPPVFVWGHESSGSGGYSEYLFKYAARKLFNVAVDHVEFKNLRNSDLREAVLEQNGEVVLRFAIANGFRNIQNMVQKLKRGKCNYHYIEIMACPSGCLNGGAQIRPTGGQSQRELTAELEALYRSLPASNPENEAVEMVYTTFLDNAGDNNMRKEFLHTSYHPIEKMNTALNIKW.

[4Fe-4S] cluster-binding residues include Cys-23, Cys-69, Cys-72, Cys-75, Cys-189, Cys-245, Cys-396, and Cys-400.

It belongs to the NARF family.

Its function is as follows. Component of the cytosolic iron-sulfur (Fe/S) protein assembly machinery. Required for maturation of extramitochondrial Fe/S proteins. This chain is Probable cytosolic Fe-S cluster assembly factor CPIJ010948, found in Culex quinquefasciatus (Southern house mosquito).